The sequence spans 79 residues: MAKEKFEEAMAKLEALVRKMETGDMTLEESLKAFEEGIRLSRLCASRLDDAERRVEMLIAENSNVTVQPLRENGEKNES.

This sequence belongs to the XseB family. Heterooligomer composed of large and small subunits.

The protein localises to the cytoplasm. It catalyses the reaction Exonucleolytic cleavage in either 5'- to 3'- or 3'- to 5'-direction to yield nucleoside 5'-phosphates.. Bidirectionally degrades single-stranded DNA into large acid-insoluble oligonucleotides, which are then degraded further into small acid-soluble oligonucleotides. In Syntrophus aciditrophicus (strain SB), this protein is Exodeoxyribonuclease 7 small subunit.